The chain runs to 300 residues: Tyrosine recombinase XerC (300 aa).

Residues 1-86 (MESVLDAFDQ…AVKTFTAWAV (86 aa)) enclose the Core-binding (CB) domain. Residues 107–294 (TLPAVLRQDQ…TVARLRAVHD (188 aa)) form the Tyr recombinase domain. Residues R151, K175, H246, R249, and H272 contribute to the active site. The active-site O-(3'-phospho-DNA)-tyrosine intermediate is Y281.

The protein belongs to the 'phage' integrase family. XerC subfamily. As to quaternary structure, forms a cyclic heterotetrameric complex composed of two molecules of XerC and two molecules of XerD.

The protein localises to the cytoplasm. In terms of biological role, site-specific tyrosine recombinase, which acts by catalyzing the cutting and rejoining of the recombining DNA molecules. The XerC-XerD complex is essential to convert dimers of the bacterial chromosome into monomers to permit their segregation at cell division. It also contributes to the segregational stability of plasmids. This Mycobacterium sp. (strain KMS) protein is Tyrosine recombinase XerC.